The sequence spans 322 residues: Phosphatidylserine decarboxylase proenzyme (322 aa).

Catalysis depends on charge relay system; for autoendoproteolytic cleavage activity residues Asp90, His147, and Ser254. Ser254 functions as the Schiff-base intermediate with substrate; via pyruvic acid; for decarboxylase activity in the catalytic mechanism. The residue at position 254 (Ser254) is a Pyruvic acid (Ser); by autocatalysis. The interval 293–322 (PDAEPAPLPAEEIEAEHDASPLVDDKKDQV) is disordered. Basic and acidic residues predominate over residues 308–322 (EHDASPLVDDKKDQV).

Belongs to the phosphatidylserine decarboxylase family. PSD-B subfamily. Prokaryotic type I sub-subfamily. Heterodimer of a large membrane-associated beta subunit and a small pyruvoyl-containing alpha subunit. It depends on pyruvate as a cofactor. In terms of processing, is synthesized initially as an inactive proenzyme. Formation of the active enzyme involves a self-maturation process in which the active site pyruvoyl group is generated from an internal serine residue via an autocatalytic post-translational modification. Two non-identical subunits are generated from the proenzyme in this reaction, and the pyruvate is formed at the N-terminus of the alpha chain, which is derived from the carboxyl end of the proenzyme. The autoendoproteolytic cleavage occurs by a canonical serine protease mechanism, in which the side chain hydroxyl group of the serine supplies its oxygen atom to form the C-terminus of the beta chain, while the remainder of the serine residue undergoes an oxidative deamination to produce ammonia and the pyruvoyl prosthetic group on the alpha chain. During this reaction, the Ser that is part of the protease active site of the proenzyme becomes the pyruvoyl prosthetic group, which constitutes an essential element of the active site of the mature decarboxylase.

It is found in the cell membrane. It carries out the reaction a 1,2-diacyl-sn-glycero-3-phospho-L-serine + H(+) = a 1,2-diacyl-sn-glycero-3-phosphoethanolamine + CO2. It functions in the pathway phospholipid metabolism; phosphatidylethanolamine biosynthesis; phosphatidylethanolamine from CDP-diacylglycerol: step 2/2. Functionally, catalyzes the formation of phosphatidylethanolamine (PtdEtn) from phosphatidylserine (PtdSer). This Escherichia coli O139:H28 (strain E24377A / ETEC) protein is Phosphatidylserine decarboxylase proenzyme.